We begin with the raw amino-acid sequence, 482 residues long: C3a anaphylatoxin chemotactic receptor (482 aa).

Residues 1-23 (MASFSAETNSTDLLSQPWNEPPV) lie on the Extracellular side of the membrane. Asn9 carries N-linked (GlcNAc...) asparagine glycosylation. Residues 24–46 (ILSMVILSLTFLLGLPGNGLVLW) traverse the membrane as a helical segment. Over 47 to 57 (VAGLKMQRTVN) the chain is Cytoplasmic. Residues 58–80 (TIWFLHLTLADLLCCLSLPFSLA) form a helical membrane-spanning segment. Residues 81 to 96 (HLALQGQWPYGRFLCK) are Extracellular-facing. Cys95 and Cys172 are joined by a disulfide. The helical transmembrane segment at 97–118 (LIPSIIVLNMFASVFLLTAISL) threads the bilayer. At 119–139 (DRCLVVFKPIWCQNHRNVGMA) the chain is on the cytoplasmic side. Residues 140-160 (CSICGCIWVVAFVMCIPVFVY) traverse the membrane as a helical segment. At 161-340 (REIFTTDNHN…TPLVAITITR (180 aa)) the chain is on the extracellular side. Tyr174 and Tyr184 each carry sulfotyrosine. N-linked (GlcNAc...) asparagine glycosylation occurs at Asn194. Residue Ser266 is glycosylated (O-linked (GalNAc...) serine). Tyr318 carries the sulfotyrosine modification. The chain crosses the membrane as a helical span at residues 341–360 (LVVGFLLPSVIMIACYSFIV). Topologically, residues 361-377 (FRMQRGRFAKSQSKTFR) are cytoplasmic. A helical membrane pass occupies residues 378–400 (VAVVVVAVFLVCWTPYHIFGVLS). The Extracellular portion of the chain corresponds to 401–417 (LLTDPETPLGKTLMSWD). The chain crosses the membrane as a helical span at residues 418 to 438 (HVCIALASANSCFNPFLYALL). At 439–482 (GKDFRKKARQSIQGILEAAFSEELTRSTHCPSNNVISERNSTTV) the chain is on the cytoplasmic side. Ser459 bears the Phosphoserine mark. Phosphothreonine is present on Thr463.

Belongs to the G-protein coupled receptor 1 family. As to quaternary structure, interacts with VGF-derived peptide TLQP-21. Among the sulfation sites Tyr-174 is essential for binding of C3a anaphylatoxin. Post-translationally, O-glycosylated. In terms of tissue distribution, widely expressed in several differentiated hematopoietic cell lines, in the lung, spleen, ovary, placenta, small intestine, throughout the brain, heart, and endothelial cells. Mostly expressed in lymphoid tissues.

The protein resides in the cell membrane. Its function is as follows. Receptor for the chemotactic and inflammatory peptide anaphylatoxin C3a. This receptor stimulates chemotaxis, granule enzyme release and superoxide anion production. The sequence is that of C3a anaphylatoxin chemotactic receptor (C3AR1) from Homo sapiens (Human).